The chain runs to 614 residues: ATP-dependent rRNA helicase SPB4 (614 aa).

The Q motif signature appears at 10–38 (WSVLKCDLHPWIKEAIKSLGYPTMTPVQA). The Helicase ATP-binding domain occupies 41-233 (IPLFSGNKDV…RTGMANPVKI (193 aa)). 54 to 61 (AVTGSGKT) contacts ATP. The DEAD box motif lies at 181-184 (DEAD). The 172-residue stretch at 260-431 (KISALIALIK…KFQKKFRKYM (172 aa)) folds into the Helicase C-terminal domain. Positions 510–581 (EYADKQKEES…IEKQLMDDSS (72 aa)) form a coiled coil. Positions 514 to 529 (KQKEESRKKNLEEDKA) are enriched in basic and acidic residues. The tract at residues 514–614 (KQKEESRKKN…DSMQGSFDDL (101 aa)) is disordered. The span at 530 to 541 (RKVHDAKKRKEL) shows a compositional bias: basic residues. Basic and acidic residues-rich tracts occupy residues 551 to 563 (KTDK…ERRE) and 584 to 595 (EETKVDWKEMVK). Positions 604 to 614 (SDSMQGSFDDL) are enriched in polar residues.

It belongs to the DEAD box helicase family. DDX55/SPB4 subfamily. As to quaternary structure, component of pre-60S ribosomal complexes.

Its subcellular location is the nucleus. It localises to the nucleolus. The enzyme catalyses ATP + H2O = ADP + phosphate + H(+). Its function is as follows. ATP-binding RNA helicase involved in the biogenesis of 60S ribosomal subunits. Binds 90S pre-ribosomal particles and dissociates from pre-60S ribosomal particles after processing of 27SB pre-rRNA. Required for the normal formation of 18S rRNA through the processing of pre-rRNAs at sites A0, A1 and A2, and the normal formation of 25S and 5.8S rRNAs through the processing of pre-rRNAs at sites C1 and C2. In Debaryomyces hansenii (strain ATCC 36239 / CBS 767 / BCRC 21394 / JCM 1990 / NBRC 0083 / IGC 2968) (Yeast), this protein is ATP-dependent rRNA helicase SPB4.